A 324-amino-acid chain; its full sequence is MKPSIILYKTLPDDLLHRLEAHFTVTQVPNLHPETVARHAQAFASAQGLLGTSETVNRALLEKMPALRAASTISVGYDNVEVDALTARKIVLMHTPAVLTETVADTVMALMLATARRVVDVAERVKAGEWTESIGPAWFGVDVHHKTLGIVGMGRIGMALAQRAHFGFTMPVLYHARRRHQEAEDRFNARYCDLDTLLQEADFVCVILPLTAETRHLFGATQFARMKSSAIFINAGRGPVVDENALIAALQNGEIYAAGLDVFEQEPLSVDSPLLNMSNVVAVPHIGSATHETRYNMMACAVDNLIDALQGKIEKNCVNPQAAG.

Residues R237 and E266 contribute to the active site. The Proton donor role is filled by H285.

The protein belongs to the D-isomer specific 2-hydroxyacid dehydrogenase family. GhrB subfamily. As to quaternary structure, homodimer.

The protein localises to the cytoplasm. It catalyses the reaction glycolate + NADP(+) = glyoxylate + NADPH + H(+). The catalysed reaction is (R)-glycerate + NAD(+) = 3-hydroxypyruvate + NADH + H(+). It carries out the reaction (R)-glycerate + NADP(+) = 3-hydroxypyruvate + NADPH + H(+). In terms of biological role, catalyzes the NADPH-dependent reduction of glyoxylate and hydroxypyruvate into glycolate and glycerate, respectively. The chain is Glyoxylate/hydroxypyruvate reductase B from Salmonella typhi.